We begin with the raw amino-acid sequence, 160 residues long: SsrA-binding protein (160 aa).

Belongs to the SmpB family.

It localises to the cytoplasm. Its function is as follows. Required for rescue of stalled ribosomes mediated by trans-translation. Binds to transfer-messenger RNA (tmRNA), required for stable association of tmRNA with ribosomes. tmRNA and SmpB together mimic tRNA shape, replacing the anticodon stem-loop with SmpB. tmRNA is encoded by the ssrA gene; the 2 termini fold to resemble tRNA(Ala) and it encodes a 'tag peptide', a short internal open reading frame. During trans-translation Ala-aminoacylated tmRNA acts like a tRNA, entering the A-site of stalled ribosomes, displacing the stalled mRNA. The ribosome then switches to translate the ORF on the tmRNA; the nascent peptide is terminated with the 'tag peptide' encoded by the tmRNA and targeted for degradation. The ribosome is freed to recommence translation, which seems to be the essential function of trans-translation. This is SsrA-binding protein from Zymomonas mobilis subsp. mobilis (strain ATCC 31821 / ZM4 / CP4).